The sequence spans 201 residues: Lipopolysaccharide core heptose(II)-phosphate phosphatase (201 aa).

Positions 1 to 35 (MLAFTLRFIKNKRYLATLAGALVIIAGLTSQHAWS) are cleaved as a signal peptide.

It belongs to the phosphoglycerate mutase family. Ais subfamily.

The protein localises to the periplasm. It participates in bacterial outer membrane biogenesis; lipopolysaccharide metabolism. Its function is as follows. Catalyzes the dephosphorylation of heptose(II) of the outer membrane lipopolysaccharide core. In Salmonella heidelberg (strain SL476), this protein is Lipopolysaccharide core heptose(II)-phosphate phosphatase.